The sequence spans 373 residues: Melanoma-associated antigen C2 (373 aa).

The interval 1-102 (MPPVPGVPFR…QGPSQSPLSS (102 aa)) is disordered. A compositionally biased stretch (low complexity) spans 40 to 60 (SSASSTLYLVFSPSSFSTSSS). Pro residues predominate over residues 85-94 (SSPPQGPPQG). The segment at 135–373 (SSFTYTLDEK…VMSSNVSFSE (239 aa)) is interaction with TRIM28. An MAGE domain is found at 141-336 (LDEKVAELVE…SSFPSWYKDA (196 aa)).

In terms of assembly, interacts with TRIM28 and UBE2H. Not expressed in normal tissues, except in germ cells in the seminiferous tubules and in Purkinje cells of the cerebellum. Expressed in various tumors, including melanoma, lymphoma, as well as pancreatic cancer, mammary gland cancer, non-small cell lung cancer and liver cancer. In hepatocellular carcinoma, there is an inverse correlation between tumor differentiation and protein expression, i.e. the lower the differentiation, the higher percentage of expression.

Its subcellular location is the cytoplasm. The protein resides in the nucleus. In terms of biological role, proposed to enhance ubiquitin ligase activity of RING-type zinc finger-containing E3 ubiquitin-protein ligases. In vitro enhances ubiquitin ligase activity of TRIM28 and stimulates p53/TP53 ubiquitination in presence of Ubl-conjugating enzyme UBE2H leading to p53/TP53 degradation. Proposed to act through recruitment and/or stabilization of the Ubl-conjugating enzymes (E2) at the E3:substrate complex. This is Melanoma-associated antigen C2 (MAGEC2) from Homo sapiens (Human).